Here is a 272-residue protein sequence, read N- to C-terminus: uncharacterized protein (272 aa).

Catalysis depends on residues Asp71 and Glu163.

This sequence belongs to the glycosyl hydrolase 25 family.

This is an uncharacterized protein from Escherichia coli O6:H1 (strain CFT073 / ATCC 700928 / UPEC).